We begin with the raw amino-acid sequence, 377 residues long: tRNA-specific 2-thiouridylase MnmA (377 aa).

Residues 9-16 (AMSGGVDS) and leucine 35 contribute to the ATP site. Cysteine 105 functions as the Nucleophile in the catalytic mechanism. A disulfide bond links cysteine 105 and cysteine 201. ATP is bound at residue glycine 129. Residues 151–153 (KNQ) are interaction with tRNA. Catalysis depends on cysteine 201, which acts as the Cysteine persulfide intermediate. The interaction with tRNA stretch occupies residues 307-308 (RY).

It belongs to the MnmA/TRMU family.

It localises to the cytoplasm. The catalysed reaction is S-sulfanyl-L-cysteinyl-[protein] + uridine(34) in tRNA + AH2 + ATP = 2-thiouridine(34) in tRNA + L-cysteinyl-[protein] + A + AMP + diphosphate + H(+). Catalyzes the 2-thiolation of uridine at the wobble position (U34) of tRNA, leading to the formation of s(2)U34. This is tRNA-specific 2-thiouridylase MnmA from Leptospira borgpetersenii serovar Hardjo-bovis (strain JB197).